A 551-amino-acid polypeptide reads, in one-letter code: Calnexin (551 aa).

An N-terminal signal peptide occupies residues 1 to 23 (MRPQNVAGVAGTGALIMAAGALA). The Lumenal portion of the chain corresponds to 24 to 477 (DQTVFHPTSL…QAIKQMPEVA (454 aa)). The segment at 293–315 (EEEPETIPDPEAEKPEEWDDEED) is disordered. A helical membrane pass occupies residues 478–498 (AGLAAAVFTLLGMLLALFGFI). Topologically, residues 499–551 (GSAPTKVKQTTVKTKAVAPVAPAGEEEKKALDQAGVEIPAEGSKKRVTRSTKE) are cytoplasmic. Positions 526 to 551 (KKALDQAGVEIPAEGSKKRVTRSTKE) are disordered.

It belongs to the calreticulin family.

Its subcellular location is the endoplasmic reticulum membrane. Its function is as follows. Endoplasmic reticulum (ER) chaperone that functions to stabilize non-native glycoproteins and retain them in the ER until they are properly folded or targeted for ER associated degradation (ERAD). With co-chaperone DNJ1, coordinately maintains ER homeostasis and contributes to maintenance of cell wall architecture. This Cryptococcus neoformans var. grubii serotype A (strain H99 / ATCC 208821 / CBS 10515 / FGSC 9487) (Filobasidiella neoformans var. grubii) protein is Calnexin.